A 209-amino-acid polypeptide reads, in one-letter code: Transmembrane protein 52 (209 aa).

The signal sequence occupies residues 1–32; sequence MARGPLAARGLRLLLPLLPLLPLLPLPQVALG. Residues 56–76 traverse the membrane as a helical segment; the sequence is VGLILLAVLLLLLCGVTAGCV. A disordered region spans residues 145–209; it reads AYSLYTPEPP…QLPPCSPGAP (65 aa). The span at 159-170 shows a compositional bias: basic and acidic residues; the sequence is EAVKMAKPREEG. Positions 186 to 202 are enriched in polar residues; it reads LETTPVPQESGPNTQLP.

The protein localises to the membrane. The polypeptide is Transmembrane protein 52 (TMEM52) (Homo sapiens (Human)).